Reading from the N-terminus, the 723-residue chain is F-box protein MAX2 homolog B (723 aa).

One can recognise an F-box domain in the interval Ala-2–Leu-55.

As to quaternary structure, part of a putative SCF (SKP1/Cullin/F-box) ubiquitin ligase complex. Interacts with KAI2IA in the presence of (-)-germacrene D. In terms of tissue distribution, mainly expressed in fully expanded leaves, lateral roots, axillary and shoot apex, and, to a lower extent, in internodes and nodes.

The protein localises to the nucleus. The protein resides in the cytoplasm. Its function is as follows. Component of SCF(ASK-cullin-F-box) E3 ubiquitin ligase complexes, which may mediate the ubiquitination and subsequent proteasomal degradation of target proteins. Is necessary for responses to strigolactones and may be involved in the ubiquitin-mediated degradation of specific proteins that activate axillary growth. Targets probably SMAX1A to degradation upon the formation of an E3 SCF ubiquitin ligase complex (ASK-cullin-F-box) containing MAX2B and KAI2IA in response to (-)-germacrene D in the stigma. This chain is F-box protein MAX2 homolog B, found in Petunia hybrida (Petunia).